Here is a 343-residue protein sequence, read N- to C-terminus: Protein RecA (343 aa).

66-73 (GPESSGKT) is a binding site for ATP. Residues 319–343 (IERQIREKHLPKRSAKADEAESAEA) are disordered.

It belongs to the RecA family.

The protein resides in the cytoplasm. Can catalyze the hydrolysis of ATP in the presence of single-stranded DNA, the ATP-dependent uptake of single-stranded DNA by duplex DNA, and the ATP-dependent hybridization of homologous single-stranded DNAs. It interacts with LexA causing its activation and leading to its autocatalytic cleavage. This is Protein RecA from Thioalkalivibrio sulfidiphilus (strain HL-EbGR7).